We begin with the raw amino-acid sequence, 705 residues long: Elongation factor G (705 aa).

The tr-type G domain maps to 7–287 (HLTRNIGIMA…YVCAFLPSPL (281 aa)). GTP is bound by residues 16 to 23 (AHIDAGKT), 84 to 88 (DTPGH), and 138 to 141 (NKMD). The disordered stretch occupies residues 291–312 (NVVGTNPDTGAEEDRKPSEDDK). Residues 302–312 (EEDRKPSEDDK) show a composition bias toward basic and acidic residues.

It belongs to the TRAFAC class translation factor GTPase superfamily. Classic translation factor GTPase family. EF-G/EF-2 subfamily.

The protein resides in the cytoplasm. In terms of biological role, catalyzes the GTP-dependent ribosomal translocation step during translation elongation. During this step, the ribosome changes from the pre-translocational (PRE) to the post-translocational (POST) state as the newly formed A-site-bound peptidyl-tRNA and P-site-bound deacylated tRNA move to the P and E sites, respectively. Catalyzes the coordinated movement of the two tRNA molecules, the mRNA and conformational changes in the ribosome. The chain is Elongation factor G from Bacteroides fragilis (strain ATCC 25285 / DSM 2151 / CCUG 4856 / JCM 11019 / LMG 10263 / NCTC 9343 / Onslow / VPI 2553 / EN-2).